The sequence spans 319 residues: MKKKKIGLLVMAYGTPESLEDVEAYYTHIRHGRKPSEEALQDLIGRYKAIGGISPLAKITKEQAHKLTDSMNNMFTEYEFNCYLGLKHTAPFIEDAVEEMKRDGIEQAISIVLAPHYSTFSIKAYNERAIRLSEEIGGPVIEPIDQWYDEPKFISYWADQIKETFTKIEDKEKAVVIFSAHSLPEKIIAAGDPYVEQLQHTADLIAAAANIQNYTIGWQSAGNTSDPWIGPDVQDLTRELFEEHRYEAFIYCPVGFVAEHLEVLYDNDYECKVVTDELNAAYFRPNMPNAQSTFIDCLATIVSKKMKEIVDKELILNNN.

Fe-coproporphyrin III contacts are provided by residues Tyr13, Arg30, 46–47 (RY), Ser54, and Tyr125. Positions 181 and 262 each coordinate Fe(2+).

The protein belongs to the ferrochelatase family.

The protein resides in the cytoplasm. The enzyme catalyses Fe-coproporphyrin III + 2 H(+) = coproporphyrin III + Fe(2+). The protein operates within porphyrin-containing compound metabolism; protoheme biosynthesis. In terms of biological role, involved in coproporphyrin-dependent heme b biosynthesis. Catalyzes the insertion of ferrous iron into coproporphyrin III to form Fe-coproporphyrin III. This chain is Coproporphyrin III ferrochelatase 2, found in Bacillus cereus (strain ZK / E33L).